A 497-amino-acid polypeptide reads, in one-letter code: CRISPR-associated endodeoxyribonuclease Cas12f1 (497 aa).

The recognition domain (REC) stretch occupies residues 29 to 122; the sequence is RKDLSTMSRF…PTYKITTAPI (94 aa). Residues 123 to 214 form a wedge domain (WED) region; the sequence is RLQNNIYKLI…YCIIPYTFPT (92 aa). A linker region spans residues 215-223; that stretch reads HETVLDPDK. The segment at 224–374 is ruvC-I; it reads VMGVDLGVAK…VAINPQYTSQ (151 aa). Active-site residues include aspartate 228 and glutamate 327. The target nucleic acid-binding (TNB) stretch occupies residues 375–432; the sequence is RCSMCGYIEKTNRSSQAVFECKQCGYGSRTICINCRHVQVSGDVCEECGGIVKKENVN. Residues cysteine 376, cysteine 379, cysteine 395, and cysteine 398 each contribute to the Zn(2+) site. The tract at residues 433 to 453 is ruvC-II; it reads ADYNAAKNISTPYIDQIIMEK. The active site involves aspartate 434.

It belongs to the CRISPR-associated endonuclease Cas12f family. As to quaternary structure, an asymmetric homodimer. Guide RNA is probably required for dimerization. The cofactor is Mg(2+). It depends on Zn(2+) as a cofactor.

Its function is as follows. CRISPR (clustered regularly interspaced short palindromic repeat), is an adaptive immune system that provides protection against mobile genetic elements (viruses, transposable elements and conjugative plasmids). CRISPR clusters contain sequences complementary to antecedent mobile elements and target invading nucleic acids. CRISPR clusters are transcribed and processed into CRISPR RNA (crRNA), which requires a trans-encoded small RNA (tracrRNA), but not this protein. Recognizes a short motif in the CRISPR repeat sequences (the 5' PAM or protospacer adjacent motif, TTC in this organism) to help distinguish self versus nonself, as targets within the CRISPR locus do not have PAMs. Has dsDNA endonuclease activity upon expression in E.coli of this protein, a mini CRISPR array and the probable tracrRNA. Plasmid cleavage is centered around positions 24 base pairs 3' of PAM. The mini system protects E.coli against transformation by foreign plasmids. The protein is CRISPR-associated endodeoxyribonuclease Cas12f1 of Syntrophomonas palmitatica (strain DSM 18709 / JCM 14374 / NBRC 102128 / MPA).